The chain runs to 260 residues: MKTNGHFKDFAWKKCFLGASVVALLVGCSPHIIETNEVALKLNYHPASEKVQALDEKILLLRPAFQYSDNIAKEYENKFKNQTTLKVEEILQNQGYKVINVDSSDKDDFSFAQKKEGYLAVAMNGEIVLRPDPKRTIQKKSEPGLLFSTGLDKMEGVLIPAGFVKVTILEPMSGESLDSFTMDLSELDIQEKFLKTTHSSHSGGLVSTMVKGTDNSNDAIKSALNKIFASIMQEMDKKLTQRNLESYQKDAKELKNKRNR.

The signal sequence occupies residues 1-27 (MKTNGHFKDFAWKKCFLGASVVALLVG). The N-palmitoyl cysteine moiety is linked to residue C28. Residue C28 is the site of S-diacylglycerol cysteine attachment.

It localises to the cell outer membrane. The sequence is that of Neuraminyllactose-binding hemagglutinin (hpaA) from Helicobacter pylori (strain J99 / ATCC 700824) (Campylobacter pylori J99).